Reading from the N-terminus, the 414-residue chain is Transforming growth factor beta-2 proprotein (414 aa).

A signal peptide spans 1–20 (MHYCVLSAFLLLHLVTAALS). Residues N72, N140, and N241 are each glycosylated (N-linked (GlcNAc...) asparagine). Disulfide bonds link C309-C318, C317-C380, C346-C411, and C350-C413.

It belongs to the TGF-beta family. As to quaternary structure, interacts with the serine proteases, HTRA1 and HTRA3. Interacts with ASPN. Interacts with MFAP5. In terms of assembly, interacts with Transforming growth factor beta-2 (TGF-beta-2) chain; interaction is non-covalent and maintains (TGF-beta-2) in a latent state. Interacts with LRRC32/GARP; leading to regulate activation of TGF-beta-2. Interacts with NREP; the interaction results in a decrease in TGFB2 autoinduction. Transforming growth factor beta-2: Homodimer; disulfide-linked. Transforming growth factor beta-2: Interacts with TGF-beta receptors (TGFBR1 and TGFBR2), leading to signal transduction. In terms of processing, the precursor proprotein is cleaved in the Golgi apparatus to form Transforming growth factor beta-2 (TGF-beta-2) and Latency-associated peptide (LAP) chains, which remain non-covalently linked, rendering TGF-beta-2 inactive.

Its subcellular location is the secreted. It localises to the extracellular space. The protein resides in the extracellular matrix. In terms of biological role, precursor of the Latency-associated peptide (LAP) and Transforming growth factor beta-2 (TGF-beta-2) chains, which constitute the regulatory and active subunit of TGF-beta-2, respectively. Its function is as follows. Required to maintain the Transforming growth factor beta-2 (TGF-beta-2) chain in a latent state during storage in extracellular matrix. Associates non-covalently with TGF-beta-2 and regulates its activation via interaction with 'milieu molecules', such as LTBP1 and LRRC32/GARP, that control activation of TGF-beta-2. Multifunctional protein that regulates various processes such as angiogenesis and heart development. Activation into mature form follows different steps: following cleavage of the proprotein in the Golgi apparatus, Latency-associated peptide (LAP) and Transforming growth factor beta-2 (TGF-beta-2) chains remain non-covalently linked rendering TGF-beta-2 inactive during storage in extracellular matrix. At the same time, LAP chain interacts with 'milieu molecules', such as LTBP1 and LRRC32/GARP, that control activation of TGF-beta-2 and maintain it in a latent state during storage in extracellular milieus. Once activated following release of LAP, TGF-beta-2 acts by binding to TGF-beta receptors (TGFBR1 and TGFBR2), which transduce signal. This Mustela putorius furo (European domestic ferret) protein is Transforming growth factor beta-2 proprotein (TGFB2).